Consider the following 145-residue polypeptide: Large ribosomal subunit protein uL11 (145 aa).

The protein belongs to the universal ribosomal protein uL11 family. As to quaternary structure, part of the ribosomal stalk of the 50S ribosomal subunit. Interacts with L10 and the large rRNA to form the base of the stalk. L10 forms an elongated spine to which L12 dimers bind in a sequential fashion forming a multimeric L10(L12)X complex. Post-translationally, one or more lysine residues are methylated.

Functionally, forms part of the ribosomal stalk which helps the ribosome interact with GTP-bound translation factors. This chain is Large ribosomal subunit protein uL11, found in Aquifex aeolicus (strain VF5).